Reading from the N-terminus, the 301-residue chain is Protoheme IX farnesyltransferase (301 aa).

Helical transmembrane passes span 9 to 29, 42 to 62, 89 to 109, 113 to 133, 142 to 162, 168 to 188, 211 to 231, 232 to 252, and 280 to 300; these read VLAY…VATI, IALI…ANSL, TSHA…WLWW, LLAG…YTMV, VVWG…AVTG, PIVL…ALAM, VTKQ…TLVP, AAGV…LLMA, and VVFV…GSLL.

It belongs to the UbiA prenyltransferase family. Protoheme IX farnesyltransferase subfamily.

It is found in the cell membrane. The enzyme catalyses heme b + (2E,6E)-farnesyl diphosphate + H2O = Fe(II)-heme o + diphosphate. The protein operates within porphyrin-containing compound metabolism; heme O biosynthesis; heme O from protoheme: step 1/1. Converts heme B (protoheme IX) to heme O by substitution of the vinyl group on carbon 2 of heme B porphyrin ring with a hydroxyethyl farnesyl side group. In Rhodococcus jostii (strain RHA1), this protein is Protoheme IX farnesyltransferase.